The sequence spans 92 residues: Putative pterin-4-alpha-carbinolamine dehydratase (92 aa).

The protein belongs to the pterin-4-alpha-carbinolamine dehydratase family.

It catalyses the reaction (4aS,6R)-4a-hydroxy-L-erythro-5,6,7,8-tetrahydrobiopterin = (6R)-L-erythro-6,7-dihydrobiopterin + H2O. This chain is Putative pterin-4-alpha-carbinolamine dehydratase, found in Haloarcula marismortui (strain ATCC 43049 / DSM 3752 / JCM 8966 / VKM B-1809) (Halobacterium marismortui).